The sequence spans 73 residues: Sec-independent protein translocase protein TatA (73 aa).

The helical transmembrane segment at 1–21 (MGSFSIWHWVIVLVVVVLIFG) threads the bilayer. A disordered region spans residues 43 to 73 (MKSEGEDAAQTPPAAQKEGGRVIDAEPADKK). Positions 60-73 (EGGRVIDAEPADKK) are enriched in basic and acidic residues.

Belongs to the TatA/E family. The Tat system comprises two distinct complexes: a TatABC complex, containing multiple copies of TatA, TatB and TatC subunits, and a separate TatA complex, containing only TatA subunits. Substrates initially bind to the TatABC complex, which probably triggers association of the separate TatA complex to form the active translocon.

It is found in the cell inner membrane. Part of the twin-arginine translocation (Tat) system that transports large folded proteins containing a characteristic twin-arginine motif in their signal peptide across membranes. TatA could form the protein-conducting channel of the Tat system. The chain is Sec-independent protein translocase protein TatA from Laribacter hongkongensis (strain HLHK9).